A 320-amino-acid polypeptide reads, in one-letter code: Putative HTH-type transcriptional regulatory protein VNG_2112C (320 aa).

Residues 132–189 (LADRREDERLSLGQLASELGVSRRTVSKYEDGMNASIEVAMRLEDLFGGELTAPVDVM) form the HTH cro/C1-type domain. Positions 143 to 162 (LGQLASELGVSRRTVSKYED) form a DNA-binding region, H-T-H motif.

The sequence is that of Putative HTH-type transcriptional regulatory protein VNG_2112C from Halobacterium salinarum (strain ATCC 700922 / JCM 11081 / NRC-1) (Halobacterium halobium).